A 206-amino-acid chain; its full sequence is Protein GrpE (206 aa).

This sequence belongs to the GrpE family. Homodimer.

The protein localises to the cytoplasm. Its function is as follows. Participates actively in the response to hyperosmotic and heat shock by preventing the aggregation of stress-denatured proteins, in association with DnaK and GrpE. It is the nucleotide exchange factor for DnaK and may function as a thermosensor. Unfolded proteins bind initially to DnaJ; upon interaction with the DnaJ-bound protein, DnaK hydrolyzes its bound ATP, resulting in the formation of a stable complex. GrpE releases ADP from DnaK; ATP binding to DnaK triggers the release of the substrate protein, thus completing the reaction cycle. Several rounds of ATP-dependent interactions between DnaJ, DnaK and GrpE are required for fully efficient folding. The chain is Protein GrpE from Shewanella baltica (strain OS223).